Consider the following 417-residue polypeptide: Serine--tRNA ligase (417 aa).

226 to 228 (TSE) contacts L-serine. ATP contacts are provided by residues 257–259 (RRE) and Val-273. Glu-280 serves as a coordination point for L-serine. Position 344–347 (344–347 (EVTS)) interacts with ATP. Thr-379 serves as a coordination point for L-serine.

This sequence belongs to the class-II aminoacyl-tRNA synthetase family. Type-1 seryl-tRNA synthetase subfamily. In terms of assembly, homodimer. The tRNA molecule binds across the dimer.

Its subcellular location is the cytoplasm. It carries out the reaction tRNA(Ser) + L-serine + ATP = L-seryl-tRNA(Ser) + AMP + diphosphate + H(+). The enzyme catalyses tRNA(Sec) + L-serine + ATP = L-seryl-tRNA(Sec) + AMP + diphosphate + H(+). It functions in the pathway aminoacyl-tRNA biosynthesis; selenocysteinyl-tRNA(Sec) biosynthesis; L-seryl-tRNA(Sec) from L-serine and tRNA(Sec): step 1/1. Catalyzes the attachment of serine to tRNA(Ser). Is also able to aminoacylate tRNA(Sec) with serine, to form the misacylated tRNA L-seryl-tRNA(Sec), which will be further converted into selenocysteinyl-tRNA(Sec). In Tropheryma whipplei (strain TW08/27) (Whipple's bacillus), this protein is Serine--tRNA ligase.